The primary structure comprises 161 residues: Regulator of ribonuclease activity A (161 aa).

Belongs to the RraA family. Homotrimer. Binds to both RNA-binding sites in the C-terminal region of Rne and to RhlB.

It is found in the cytoplasm. Its function is as follows. Globally modulates RNA abundance by binding to RNase E (Rne) and regulating its endonucleolytic activity. Can modulate Rne action in a substrate-dependent manner by altering the composition of the degradosome. Modulates RNA-binding and helicase activities of the degradosome. This chain is Regulator of ribonuclease activity A, found in Salmonella agona (strain SL483).